The chain runs to 281 residues: 32 kDa heat shock protein (281 aa).

A compositionally biased stretch (acidic residues) spans 142–168; it reads EDDEEIDSDEEFGDSDQDEEDSDDEEI. Residues 142-281 form a disordered region; that stretch reads EDDEEIDSDE…NENNKKKQKN (140 aa). Basic and acidic residues predominate over residues 180–209; that stretch reads KITEISEVPESKKEKTPEPKKVPEPKKEQV. A compositionally biased stretch (low complexity) spans 210-273; sequence KQPTQPQQKK…NNKRPQNQNE (64 aa).

The polypeptide is 32 kDa heat shock protein (hspC) (Dictyostelium discoideum (Social amoeba)).